A 1197-amino-acid polypeptide reads, in one-letter code: Pleckstrin homology domain-containing family A member 7 (1197 aa).

2 WW domains span residues 8 to 41 (DTLPDNGSYGVCRDGRVFFIDDEARATTWLHPRT) and 53 to 86 (SDLPSGWEEGFTKEGASFFIDHNQRTTTFIHPVT). Residues 98 to 148 (LQDQPGGRMLKQPSSTISEASTTVTTSTVDSTSGSKGSRSSGRVHSFGKRD) form a disordered region. Over residues 111 to 140 (SSTISEASTTVTTSTVDSTSGSKGSRSSGR) the composition is skewed to low complexity. The PH domain maps to 158–257 (PVVVRGWLYK…WVRAMNQAAL (100 aa)). Disordered regions lie at residues 348–384 (PGSTPPSRVASRAPSRAVSTPPVVQRNGTPIEQNGMP), 423–467 (LVST…QLPS), and 508–577 (FRHG…TVRP). Low complexity predominate over residues 528 to 546 (VSSTRNNSDVSRSVSVPPT). A compositionally biased stretch (basic and acidic residues) spans 568–577 (TPAERVTVRP). The stretch at 678-799 (DKILQELEFR…RIEDVMTGLS (122 aa)) forms a coiled coil. 2 disordered regions span residues 830–928 (SRCM…SYSN) and 1032–1064 (HQRALVRERKRNLSQGERHHSRASTRPVNSDPG). The span at 913-924 (RQSDERKRDRES) shows a compositional bias: basic and acidic residues. Positions 1016–1044 (QRVRMSVEEQLERMKRHQRALVRERKRNL) form a coiled coil. A compositionally biased stretch (basic residues) spans 1032-1043 (HQRALVRERKRN).

The protein resides in the cell junction. Its subcellular location is the adherens junction. It is found in the cytoplasm. The protein localises to the cytoskeleton. It localises to the microtubule organizing center. The protein resides in the centrosome. Functionally, required for zonula adherens biogenesis and maintenance. In Danio rerio (Zebrafish), this protein is Pleckstrin homology domain-containing family A member 7 (plekha7).